A 380-amino-acid chain; its full sequence is Cytochrome b (380 aa).

4 consecutive transmembrane segments (helical) span residues 33–53 (FGSL…FLAM), 77–98 (WLIR…FIHV), 113–133 (WNIG…GYVL), and 178–198 (FFAF…VHLL). Residues His83 and His97 each contribute to the heme b site. His182 and His196 together coordinate heme b. His201 is a binding site for a ubiquinone. 4 consecutive transmembrane segments (helical) span residues 226 to 246 (IKDL…VLFF), 288 to 308 (LGGV…PLLN), 320 to 340 (LTQF…WIGG), and 347 to 367 (FTTI…VLMP).

Belongs to the cytochrome b family. The cytochrome bc1 complex contains 11 subunits: 3 respiratory subunits (MT-CYB, CYC1 and UQCRFS1), 2 core proteins (UQCRC1 and UQCRC2) and 6 low-molecular weight proteins (UQCRH/QCR6, UQCRB/QCR7, UQCRQ/QCR8, UQCR10/QCR9, UQCR11/QCR10 and a cleavage product of UQCRFS1). This cytochrome bc1 complex then forms a dimer. Requires heme b as cofactor.

Its subcellular location is the mitochondrion inner membrane. In terms of biological role, component of the ubiquinol-cytochrome c reductase complex (complex III or cytochrome b-c1 complex) that is part of the mitochondrial respiratory chain. The b-c1 complex mediates electron transfer from ubiquinol to cytochrome c. Contributes to the generation of a proton gradient across the mitochondrial membrane that is then used for ATP synthesis. The sequence is that of Cytochrome b (MT-CYB) from Thomasomys notatus (Distinguished oldfield mouse).